The primary structure comprises 105 residues: Large ribosomal subunit protein bL21 (105 aa).

The protein belongs to the bacterial ribosomal protein bL21 family. As to quaternary structure, part of the 50S ribosomal subunit. Contacts protein L20.

This protein binds to 23S rRNA in the presence of protein L20. This chain is Large ribosomal subunit protein bL21, found in Stenotrophomonas maltophilia (strain R551-3).